We begin with the raw amino-acid sequence, 334 residues long: Ornithine carbamoyltransferase (334 aa).

Carbamoyl phosphate is bound by residues 57–60 (STRT), glutamine 84, arginine 108, and 135–138 (HPTQ). L-ornithine-binding positions include asparagine 169, aspartate 233, and 237–238 (SM). Residues 275–276 (CL) and arginine 320 each bind carbamoyl phosphate.

Belongs to the aspartate/ornithine carbamoyltransferase superfamily. OTCase family. In terms of assembly, homotrimer.

It localises to the cytoplasm. It catalyses the reaction carbamoyl phosphate + L-ornithine = L-citrulline + phosphate + H(+). The protein operates within amino-acid biosynthesis; L-arginine biosynthesis; L-arginine from L-ornithine and carbamoyl phosphate: step 1/3. Functionally, reversibly catalyzes the transfer of the carbamoyl group from carbamoyl phosphate (CP) to the N(epsilon) atom of ornithine (ORN) to produce L-citrulline. This chain is Ornithine carbamoyltransferase, found in Vibrio vulnificus (strain CMCP6).